We begin with the raw amino-acid sequence, 98 residues long: uncharacterized protein (98 aa).

Over residues 1–10 (MARRRKPLHR) the composition is skewed to basic residues. A disordered region spans residues 1 to 21 (MARRRKPLHRQRPEPPSWALR).

This is an uncharacterized protein from Mycobacterium bovis (strain ATCC BAA-935 / AF2122/97).